Consider the following 572-residue polypeptide: Proline--tRNA ligase (572 aa).

Belongs to the class-II aminoacyl-tRNA synthetase family. ProS type 1 subfamily. As to quaternary structure, homodimer.

It localises to the cytoplasm. The catalysed reaction is tRNA(Pro) + L-proline + ATP = L-prolyl-tRNA(Pro) + AMP + diphosphate. Catalyzes the attachment of proline to tRNA(Pro) in a two-step reaction: proline is first activated by ATP to form Pro-AMP and then transferred to the acceptor end of tRNA(Pro). As ProRS can inadvertently accommodate and process non-cognate amino acids such as alanine and cysteine, to avoid such errors it has two additional distinct editing activities against alanine. One activity is designated as 'pretransfer' editing and involves the tRNA(Pro)-independent hydrolysis of activated Ala-AMP. The other activity is designated 'posttransfer' editing and involves deacylation of mischarged Ala-tRNA(Pro). The misacylated Cys-tRNA(Pro) is not edited by ProRS. The sequence is that of Proline--tRNA ligase from Salmonella newport (strain SL254).